The sequence spans 100 residues: Aspartyl/glutamyl-tRNA(Asn/Gln) amidotransferase subunit C (100 aa).

This sequence belongs to the GatC family. As to quaternary structure, heterotrimer of A, B and C subunits.

It carries out the reaction L-glutamyl-tRNA(Gln) + L-glutamine + ATP + H2O = L-glutaminyl-tRNA(Gln) + L-glutamate + ADP + phosphate + H(+). The enzyme catalyses L-aspartyl-tRNA(Asn) + L-glutamine + ATP + H2O = L-asparaginyl-tRNA(Asn) + L-glutamate + ADP + phosphate + 2 H(+). Functionally, allows the formation of correctly charged Asn-tRNA(Asn) or Gln-tRNA(Gln) through the transamidation of misacylated Asp-tRNA(Asn) or Glu-tRNA(Gln) in organisms which lack either or both of asparaginyl-tRNA or glutaminyl-tRNA synthetases. The reaction takes place in the presence of glutamine and ATP through an activated phospho-Asp-tRNA(Asn) or phospho-Glu-tRNA(Gln). This chain is Aspartyl/glutamyl-tRNA(Asn/Gln) amidotransferase subunit C, found in Streptococcus suis (strain 98HAH33).